A 315-amino-acid chain; its full sequence is 4-hydroxy-3-methylbut-2-enyl diphosphate reductase (315 aa).

[4Fe-4S] cluster is bound at residue cysteine 12. Histidine 41 and histidine 74 together coordinate (2E)-4-hydroxy-3-methylbut-2-enyl diphosphate. Histidine 41 and histidine 74 together coordinate dimethylallyl diphosphate. Residues histidine 41 and histidine 74 each contribute to the isopentenyl diphosphate site. Cysteine 96 provides a ligand contact to [4Fe-4S] cluster. Position 124 (histidine 124) interacts with (2E)-4-hydroxy-3-methylbut-2-enyl diphosphate. Histidine 124 lines the dimethylallyl diphosphate pocket. Histidine 124 contributes to the isopentenyl diphosphate binding site. Residue glutamate 126 is the Proton donor of the active site. Threonine 168 lines the (2E)-4-hydroxy-3-methylbut-2-enyl diphosphate pocket. Cysteine 198 lines the [4Fe-4S] cluster pocket. The (2E)-4-hydroxy-3-methylbut-2-enyl diphosphate site is built by serine 226, serine 227, asparagine 228, and serine 270. Serine 226, serine 227, asparagine 228, and serine 270 together coordinate dimethylallyl diphosphate. Isopentenyl diphosphate contacts are provided by serine 226, serine 227, asparagine 228, and serine 270.

Belongs to the IspH family. It depends on [4Fe-4S] cluster as a cofactor.

It catalyses the reaction isopentenyl diphosphate + 2 oxidized [2Fe-2S]-[ferredoxin] + H2O = (2E)-4-hydroxy-3-methylbut-2-enyl diphosphate + 2 reduced [2Fe-2S]-[ferredoxin] + 2 H(+). It carries out the reaction dimethylallyl diphosphate + 2 oxidized [2Fe-2S]-[ferredoxin] + H2O = (2E)-4-hydroxy-3-methylbut-2-enyl diphosphate + 2 reduced [2Fe-2S]-[ferredoxin] + 2 H(+). It participates in isoprenoid biosynthesis; dimethylallyl diphosphate biosynthesis; dimethylallyl diphosphate from (2E)-4-hydroxy-3-methylbutenyl diphosphate: step 1/1. Its pathway is isoprenoid biosynthesis; isopentenyl diphosphate biosynthesis via DXP pathway; isopentenyl diphosphate from 1-deoxy-D-xylulose 5-phosphate: step 6/6. Its function is as follows. Catalyzes the conversion of 1-hydroxy-2-methyl-2-(E)-butenyl 4-diphosphate (HMBPP) into a mixture of isopentenyl diphosphate (IPP) and dimethylallyl diphosphate (DMAPP). Acts in the terminal step of the DOXP/MEP pathway for isoprenoid precursor biosynthesis. This chain is 4-hydroxy-3-methylbut-2-enyl diphosphate reductase, found in Pseudomonas putida (strain W619).